An 877-amino-acid chain; its full sequence is DNA mismatch repair protein MutS (877 aa).

630-637 (GPNMAGKS) provides a ligand contact to ATP.

Belongs to the DNA mismatch repair MutS family.

Its function is as follows. This protein is involved in the repair of mismatches in DNA. It is possible that it carries out the mismatch recognition step. This protein has a weak ATPase activity. This chain is DNA mismatch repair protein MutS, found in Jannaschia sp. (strain CCS1).